Reading from the N-terminus, the 428-residue chain is Gamma-glutamyl phosphate reductase (428 aa).

It belongs to the gamma-glutamyl phosphate reductase family.

The protein resides in the cytoplasm. The catalysed reaction is L-glutamate 5-semialdehyde + phosphate + NADP(+) = L-glutamyl 5-phosphate + NADPH + H(+). Its pathway is amino-acid biosynthesis; L-proline biosynthesis; L-glutamate 5-semialdehyde from L-glutamate: step 2/2. Functionally, catalyzes the NADPH-dependent reduction of L-glutamate 5-phosphate into L-glutamate 5-semialdehyde and phosphate. The product spontaneously undergoes cyclization to form 1-pyrroline-5-carboxylate. In Mesorhizobium japonicum (strain LMG 29417 / CECT 9101 / MAFF 303099) (Mesorhizobium loti (strain MAFF 303099)), this protein is Gamma-glutamyl phosphate reductase.